The chain runs to 396 residues: Elongation factor Tu 2 (396 aa).

In terms of domain architecture, tr-type G spans 10–206 (KPHVNIGTIG…AVDSYIPTPQ (197 aa)). Residues 19 to 26 (GHVDHGKT) form a G1 region. 19 to 26 (GHVDHGKT) serves as a coordination point for GTP. Threonine 26 serves as a coordination point for Mg(2+). A G2 region spans residues 60–64 (GITIS). The segment at 81–84 (DCPG) is G3. GTP is bound by residues 81–85 (DCPGH) and 136–139 (NKVD). The interval 136 to 139 (NKVD) is G4. Residues 174–176 (SAL) are G5.

The protein belongs to the TRAFAC class translation factor GTPase superfamily. Classic translation factor GTPase family. EF-Tu/EF-1A subfamily. Monomer.

The protein localises to the cytoplasm. The enzyme catalyses GTP + H2O = GDP + phosphate + H(+). Functionally, GTP hydrolase that promotes the GTP-dependent binding of aminoacyl-tRNA to the A-site of ribosomes during protein biosynthesis. This chain is Elongation factor Tu 2, found in Myxococcus xanthus (strain DK1622).